We begin with the raw amino-acid sequence, 571 residues long: PHD and RING finger domain-containing protein C126.07c (571 aa).

An RING-type 1; atypical zinc finger spans residues 18-79 (CIICLSNLPN…RVANTCPLCR (62 aa)). The segment at 122 to 170 (TCRCVICGRSDHAEVLLLCDGCDDAYHTYCLNMDAVPIEEFYCPNCVLL) adopts a PHD-type zinc-finger fold. The RING-type 2; degenerate zinc-finger motif lies at 125-168 (CVICGRSDHAEVLLLCDGCDDAYHTYCLNMDAVPIEEFYCPNCV). Polar residues predominate over residues 305–324 (ATEATISNPRPSSGRFQQTP). The interval 305 to 377 (ATEATISNPR…VLGNNSSSKS (73 aa)) is disordered. A compositionally biased stretch (basic residues) spans 346–356 (RRQKRPTRRHI). Positions 359-377 (SNKSSGSSTVLGNNSSSKS) are enriched in polar residues.

The protein resides in the cytoplasm. Its subcellular location is the nucleus. The chain is PHD and RING finger domain-containing protein C126.07c from Schizosaccharomyces pombe (strain 972 / ATCC 24843) (Fission yeast).